Reading from the N-terminus, the 416-residue chain is L-threonine dehydratase biosynthetic IlvA (416 aa).

An N6-(pyridoxal phosphate)lysine modification is found at Lys-51. Residues Asn-78, 184 to 188, and Ser-309 contribute to the pyridoxal 5'-phosphate site; that span reads GGGGL. The 75-residue stretch at 333-407 folds into the ACT-like domain; sequence HYFVINFPQR…FDNRYVNLHG (75 aa).

Belongs to the serine/threonine dehydratase family. In terms of assembly, homotetramer. It depends on pyridoxal 5'-phosphate as a cofactor.

It catalyses the reaction L-threonine = 2-oxobutanoate + NH4(+). Its pathway is amino-acid biosynthesis; L-isoleucine biosynthesis; 2-oxobutanoate from L-threonine: step 1/1. Its function is as follows. Catalyzes the anaerobic formation of alpha-ketobutyrate and ammonia from threonine in a two-step reaction. The first step involved a dehydration of threonine and a production of enamine intermediates (aminocrotonate), which tautomerizes to its imine form (iminobutyrate). Both intermediates are unstable and short-lived. The second step is the nonenzymatic hydrolysis of the enamine/imine intermediates to form 2-ketobutyrate and free ammonia. In the low water environment of the cell, the second step is accelerated by RidA. The protein is L-threonine dehydratase biosynthetic IlvA (ilvA) of Lactococcus lactis subsp. lactis (strain IL1403) (Streptococcus lactis).